The sequence spans 500 residues: Pyridine nucleotide-disulfide oxidoreductase domain-containing protein 1 (500 aa).

Met1 carries the N-acetylmethionine modification. Residues 211 to 235 (TRYTTEGRKKEARSKSKADNVGSAL) are disordered. A compositionally biased stretch (basic and acidic residues) spans 213–228 (YTTEGRKKEARSKSKA).

It belongs to the class-I pyridine nucleotide-disulfide oxidoreductase family. PYROXD1 subfamily. It depends on FAD as a cofactor.

The protein resides in the nucleus. The protein localises to the cytoplasm. It localises to the myofibril. Its subcellular location is the sarcomere. Probable FAD-dependent oxidoreductase; involved in the cellular oxidative stress response. Required for normal sarcomere structure and muscle fiber integrity. This is Pyridine nucleotide-disulfide oxidoreductase domain-containing protein 1 (PYROXD1) from Homo sapiens (Human).